Reading from the N-terminus, the 599-residue chain is Group II intron-encoded protein LtrA (599 aa).

The 292-residue stretch at 70–361 (IIQSLKDGTY…QPARFLGYDI (292 aa)) folds into the Reverse transcriptase domain. The intron maturase type-2 stretch occupies residues 381 to 549 (NGSVELLIPL…AKCCELCGTS (169 aa)).

In the N-terminal section; belongs to the bacterial reverse transcriptase family. In terms of assembly, homodimer. Mg(2+) is required as a cofactor.

The enzyme catalyses DNA(n) + a 2'-deoxyribonucleoside 5'-triphosphate = DNA(n+1) + diphosphate. Multifunctional protein that promotes group II intron splicing and mobility by acting both on RNA and DNA. It has three activities: reverse transcriptase (RT) for intron duplication, maturase to promote splicing, and DNA endonuclease for site-specific cleavage of recipient alleles. The intron-encoded protein promotes splicing by facilitating the formation of the catalytically active structure of the intron RNA. After splicing, the protein remains bound to the excised intron lariat RNA, forming ribonucleoprotein particles, and cleaving the antisense strand of the recipient DNA in the 3' exon. After DNA cleavage, retrohoming occurs by a target DNA-primed reverse transcription of the intron RNA that had reverse spliced into the sense strand of the recipient DNA. It also contributes to the recognition of the DNA target site and acts as a repressor of its own translation. The chain is Group II intron-encoded protein LtrA (ltrA) from Lactococcus lactis subsp. cremoris (Streptococcus cremoris).